We begin with the raw amino-acid sequence, 127 residues long: Glycine cleavage system H protein (127 aa).

The region spanning 24–105 is the Lipoyl-binding domain; the sequence is TVKVGISDHA…PYEAWLFAVR (82 aa). Residue lysine 65 is modified to N6-lipoyllysine.

This sequence belongs to the GcvH family. As to quaternary structure, the glycine cleavage system is composed of four proteins: P, T, L and H. (R)-lipoate serves as cofactor.

Functionally, the glycine cleavage system catalyzes the degradation of glycine. The H protein shuttles the methylamine group of glycine from the P protein to the T protein. This chain is Glycine cleavage system H protein, found in Methylococcus capsulatus (strain ATCC 33009 / NCIMB 11132 / Bath).